Here is a 304-residue protein sequence, read N- to C-terminus: tRNA pseudouridine synthase B (304 aa).

Residue D48 is the Nucleophile of the active site.

The protein belongs to the pseudouridine synthase TruB family. Type 1 subfamily.

It carries out the reaction uridine(55) in tRNA = pseudouridine(55) in tRNA. In terms of biological role, responsible for synthesis of pseudouridine from uracil-55 in the psi GC loop of transfer RNAs. The polypeptide is tRNA pseudouridine synthase B (Pseudomonas paraeruginosa (strain DSM 24068 / PA7) (Pseudomonas aeruginosa (strain PA7))).